Here is a 399-residue protein sequence, read N- to C-terminus: Putative 8-amino-7-oxononanoate synthase (399 aa).

R23 provides a ligand contact to substrate. A pyridoxal 5'-phosphate-binding site is contributed by 110 to 111 (GY). H135 is a binding site for substrate. Pyridoxal 5'-phosphate contacts are provided by residues S183, 208–211 (DEAH), and 239–242 (TLSK). K242 is subject to N6-(pyridoxal phosphate)lysine. T364 provides a ligand contact to substrate.

The protein belongs to the class-II pyridoxal-phosphate-dependent aminotransferase family. BioF subfamily. Homodimer. It depends on pyridoxal 5'-phosphate as a cofactor.

It carries out the reaction 6-carboxyhexanoyl-[ACP] + L-alanine + H(+) = (8S)-8-amino-7-oxononanoate + holo-[ACP] + CO2. The protein operates within cofactor biosynthesis; biotin biosynthesis. Catalyzes the decarboxylative condensation of pimeloyl-[acyl-carrier protein] and L-alanine to produce 8-amino-7-oxononanoate (AON), [acyl-carrier protein], and carbon dioxide. This chain is Putative 8-amino-7-oxononanoate synthase (bioF), found in Cyanothece sp. (strain PCC 7425 / ATCC 29141).